Reading from the N-terminus, the 239-residue chain is Ribonuclease PH (239 aa).

Phosphate contacts are provided by residues R86 and G124–R126.

This sequence belongs to the RNase PH family. As to quaternary structure, homohexameric ring arranged as a trimer of dimers.

It catalyses the reaction tRNA(n+1) + phosphate = tRNA(n) + a ribonucleoside 5'-diphosphate. Phosphorolytic 3'-5' exoribonuclease that plays an important role in tRNA 3'-end maturation. Removes nucleotide residues following the 3'-CCA terminus of tRNAs; can also add nucleotides to the ends of RNA molecules by using nucleoside diphosphates as substrates, but this may not be physiologically important. Probably plays a role in initiation of 16S rRNA degradation (leading to ribosome degradation) during starvation. This Cupriavidus necator (strain ATCC 17699 / DSM 428 / KCTC 22496 / NCIMB 10442 / H16 / Stanier 337) (Ralstonia eutropha) protein is Ribonuclease PH.